We begin with the raw amino-acid sequence, 225 residues long: 2-amino-5-formylamino-6-ribosylaminopyrimidin-4(3H)-one 5'-monophosphate deformylase (225 aa).

Fe cation-binding residues include E28, H30, D39, and H107.

The protein belongs to the creatininase superfamily. FAPy deformylase family. In terms of assembly, homodimer. The cofactor is Fe(2+). It depends on Zn(2+) as a cofactor.

It carries out the reaction 2-amino-5-formylamino-6-(5-phospho-D-ribosylamino)pyrimidin-4(3H)-one + H2O = 2,5-diamino-6-(1-D-ribosylamino)pyrimidin-4(3H)-one 5'-phosphate + formate + H(+). It functions in the pathway cofactor biosynthesis; coenzyme F420 biosynthesis. Its pathway is cofactor biosynthesis; riboflavin biosynthesis. Functionally, catalyzes the hydrolysis of the formamide of 2-amino-5-formylamino-6-ribosylamino-4(3H)-pyrimidinone 5'-monophosphate (FAPy) to form 2,5-diamino-6-ribosylamino-4(3H)-pyrimidinone 5'-phosphate (APy). In Methanocaldococcus fervens (strain DSM 4213 / JCM 15782 / AG86) (Methanococcus fervens), this protein is 2-amino-5-formylamino-6-ribosylaminopyrimidin-4(3H)-one 5'-monophosphate deformylase.